The sequence spans 376 residues: 1-acyl-sn-glycerol-3-phosphate acyltransferase 3 (376 aa).

Helical transmembrane passes span 14-34 (VLFLISGLIVNIIQLVFFIIV) and 49-69 (VAELLWLQLIWLFDWWACIKI). The HXXXXD motif signature appears at 92-97 (HRSDID). A run of 3 helical transmembrane segments spans residues 98–118 (WLIGWVMAQRVGCLGSSLAIM), 306–326 (LIVVIIWLGFLVFGGFKLLQW), and 335–355 (IILLFVFFLVIATITMQILIQ).

Belongs to the 1-acyl-sn-glycerol-3-phosphate acyltransferase family. In terms of tissue distribution, predominantly expressed in pollen.

It localises to the membrane. The catalysed reaction is a 1-acyl-sn-glycero-3-phosphate + an acyl-CoA = a 1,2-diacyl-sn-glycero-3-phosphate + CoA. It participates in phospholipid metabolism; CDP-diacylglycerol biosynthesis; CDP-diacylglycerol from sn-glycerol 3-phosphate: step 2/3. In terms of biological role, converts lysophosphatidic acid (LPA) into phosphatidic acid by incorporating acyl moiety at the 2 position. Has preference for C-18-CoA substrates compared to C-16-CoA substrates. The protein is 1-acyl-sn-glycerol-3-phosphate acyltransferase 3 (LPAT3) of Arabidopsis thaliana (Mouse-ear cress).